The sequence spans 357 residues: S-adenosyl-L-methionine:benzoic acid/salicylic acid carboxyl methyltransferase 1 (357 aa).

Residue tyrosine 18 coordinates S-adenosyl-L-homocysteine. Glutamine 25 is a benzoate binding site. Cysteine 59, asparagine 64, aspartate 96, leucine 97, serine 135, and phenylalanine 136 together coordinate S-adenosyl-L-homocysteine. Benzoate is bound at residue tryptophan 157. Mg(2+)-binding residues include asparagine 168, aspartate 254, phenylalanine 256, and asparagine 257. Residue glutamine 260 participates in benzoate binding.

The protein belongs to the methyltransferase superfamily. Type-7 methyltransferase family. In terms of tissue distribution, predominantly expressed in petal limbs and tubes of corollas.

The catalysed reaction is benzoate + S-adenosyl-L-methionine = methyl benzoate + S-adenosyl-L-homocysteine. It catalyses the reaction salicylate + S-adenosyl-L-methionine = methyl salicylate + S-adenosyl-L-homocysteine. The protein operates within aromatic compound metabolism. Converts benzoic acid into the volatile ester methyl benzoates. This scent, mostly produced in a rhythmical, diurnal manner, attracts the pollinators. The protein is S-adenosyl-L-methionine:benzoic acid/salicylic acid carboxyl methyltransferase 1 of Petunia hybrida (Petunia).